The sequence spans 464 residues: MGPIMPPSKKPESTGISVSSQCYRSSTLSNPLHDDDDLDFPPPAVKINKEKGGMEDEELTNLNWLHESKNLLKSFGDTVLRSVSPVQDIDDDTPPSPAQSDMPYDAKQNPNCKPPYSFSCLIFMAIEDSPTKRLPVKDIYNWILEHFPYFANAPTGWKNSVRHNLSLNKCFKKVDKDRSQSIGKGSLWCIDPEYRQNLIQALKKTPYHPYSHVFNTPPTSPQAYQSTSVPPLWPGSTFFKKNGALLQVPPGVIQNGARVLNRGIFSGVRPLPINPIGAMAASVRNGIANCRTRMESEPSCGSPLVSSDPKDDHNYSSAKSANKRSSSPSDSISSSSADDHYEFAAKVCREGSDISFQSHESFSETEEEDKKQIKKELKDSLVESGYSSQHKKKQHLLKLRRIPSDALPLKKRRTEKPPESDDEEMKEAAGSLLHLAGIRSCLNNITNRTAKGQKEQKDKETTKN.

2 disordered regions span residues 1–53 (MGPI…EKGG) and 85–108 (PVQD…DAKQ). Positions 14 to 30 (TGISVSSQCYRSSTLSN) are enriched in polar residues. The fork-head DNA-binding region spans 113-209 (KPPYSFSCLI…QALKKTPYHP (97 aa)). Disordered regions lie at residues 294-337 (MESE…SSSA) and 381-428 (LVES…MKEA). A compositionally biased stretch (low complexity) spans 316 to 336 (SSAKSANKRSSSPSDSISSSS). Residues 389-401 (QHKKKQHLLKLRR) are compositionally biased toward basic residues.

The protein localises to the nucleus. In terms of biological role, acts as a transcriptional repressor. May be involved in DNA damage-inducible cell cycle arrests (checkpoints). This Xenopus tropicalis (Western clawed frog) protein is Forkhead box protein N3.